Here is a 148-residue protein sequence, read N- to C-terminus: IEDEYGNVLHASGGYAAPAAYAAPVAYAAPVAKAVVAAPAVAYAAPVAKAVVAEPVAYPKYEFNYGVHDAHTGDIKQQSEARDGDVVKGSYSLVEPDGSTRTVEYQADDHNGFNAVVHRTPGTHPVAVAPVAVAHAPVAVAHAPIAYH.

A run of 5 repeats spans residues 16-19, Ala-22, 28-31, 37-40, and 44-47. One can recognise a Chitin-binding type R&amp;R domain in the interval 58 to 128; sequence YPKYEFNYGV…RTPGTHPVAV (71 aa).

Its function is as follows. Component of the cuticle of migratory locust which contains more than 100 different structural proteins. The chain is Cuticle protein 8 from Locusta migratoria (Migratory locust).